The sequence spans 298 residues: Distal tail protein (298 aa).

This sequence belongs to the skunalikevirus distal tail protein family. Homohexamer. Interacts with the receptor binding protein.

The protein resides in the virion. Its function is as follows. Forms the distal part of the tail. Self-associates as two rings organized back to back, with a central channel allowing DNA ejection. This is Distal tail protein from Lactococcus lactis (Lactococcus lactis bacteriophage p2).